Consider the following 127-residue polypeptide: uncharacterized protein (127 aa).

The region spanning 1–46 (MEVGLSPSACLRRIKLMEQAGVIRGYTALVDPTQSESTIAVIINIT) is the HTH asnC-type domain.

Its function is as follows. Not known, symbiotically active. This is an uncharacterized protein from Sinorhizobium fredii (strain NBRC 101917 / NGR234).